We begin with the raw amino-acid sequence, 404 residues long: Cysteine desulfurase IscS (404 aa).

Residues 75-76 (AT), Asn-155, Gln-183, and 203-205 (SAH) contribute to the pyridoxal 5'-phosphate site. Lys-206 carries the N6-(pyridoxal phosphate)lysine modification. Thr-243 is a pyridoxal 5'-phosphate binding site. The Cysteine persulfide intermediate role is filled by Cys-328. Cys-328 lines the [2Fe-2S] cluster pocket.

This sequence belongs to the class-V pyridoxal-phosphate-dependent aminotransferase family. NifS/IscS subfamily. In terms of assembly, homodimer. Forms a heterotetramer with IscU, interacts with other sulfur acceptors. Pyridoxal 5'-phosphate is required as a cofactor.

It localises to the cytoplasm. The enzyme catalyses (sulfur carrier)-H + L-cysteine = (sulfur carrier)-SH + L-alanine. It participates in cofactor biosynthesis; iron-sulfur cluster biosynthesis. Master enzyme that delivers sulfur to a number of partners involved in Fe-S cluster assembly, tRNA modification or cofactor biosynthesis. Catalyzes the removal of elemental sulfur atoms from cysteine to produce alanine. Functions as a sulfur delivery protein for Fe-S cluster synthesis onto IscU, an Fe-S scaffold assembly protein, as well as other S acceptor proteins. This is Cysteine desulfurase IscS from Aeromonas salmonicida (strain A449).